The chain runs to 540 residues: Putative serine protease F56F10.1 (540 aa).

A signal peptide spans methionine 1 to alanine 16. N-linked (GlcNAc...) asparagine glycans are attached at residues asparagine 58 and asparagine 87. Serine 182 functions as the Charge relay system in the catalytic mechanism. N-linked (GlcNAc...) asparagine glycosylation is found at asparagine 270, asparagine 300, asparagine 317, asparagine 343, asparagine 441, and asparagine 449. The Charge relay system role is filled by aspartate 453. Residue asparagine 475 is glycosylated (N-linked (GlcNAc...) asparagine). Histidine 479 (charge relay system) is an active-site residue.

The protein belongs to the peptidase S28 family.

In Caenorhabditis elegans, this protein is Putative serine protease F56F10.1.